Consider the following 493-residue polypeptide: Probable cytochrome P450 CYP36A1 (493 aa).

The next 3 membrane-spanning stretches (helical) occupy residues 1–21, 60–80, and 290–310; these read MLFAQLVILVIIVMLFLCRFA, GGIFTLWLPFPTIVICDYDML, and QLIVAIYDLYSAGMETIIIVL. C440 serves as a coordination point for heme.

It belongs to the cytochrome P450 family. The cofactor is heme.

It is found in the membrane. In terms of biological role, cytochromes P450 are a group of heme-thiolate monooxygenases. They oxidize a variety of structurally unrelated compounds, including steroids, fatty acids, and xenobiotics. This Caenorhabditis elegans protein is Probable cytochrome P450 CYP36A1 (cyp-36A1).